The chain runs to 153 residues: Endoribonuclease YbeY (153 aa).

Residues His118, His122, and His128 each contribute to the Zn(2+) site.

It belongs to the endoribonuclease YbeY family. Requires Zn(2+) as cofactor.

The protein resides in the cytoplasm. Single strand-specific metallo-endoribonuclease involved in late-stage 70S ribosome quality control and in maturation of the 3' terminus of the 16S rRNA. The protein is Endoribonuclease YbeY of Clostridioides difficile (strain 630) (Peptoclostridium difficile).